The sequence spans 406 residues: Probable endo-xylogalacturonan hydrolase A (406 aa).

The N-terminal stretch at 1–18 is a signal peptide; sequence MLYPRNLALFSLLSLSSA. PbH1 repeat units lie at residues 183–213, 214–235, 237–257, and 299–320; these read TQHV…DIGA, STHV…AFKP, SNYV…SVGS, and VKNV…QIES. D228 (proton donor) is an active-site residue. Residue H251 is part of the active site. N301 carries N-linked (GlcNAc...) asparagine glycosylation.

It belongs to the glycosyl hydrolase 28 family.

Its subcellular location is the secreted. In terms of biological role, pectinolytic enzyme involved in the degradation of xylogalacturonan (xga), a galacturonan backbone heavily substituted with xylose, and which is one important component of the hairy regions of pectin. Activity requires a galacturonic acid backbone substituted with xylose. This chain is Probable endo-xylogalacturonan hydrolase A (xghA), found in Aspergillus fumigatus (strain ATCC MYA-4609 / CBS 101355 / FGSC A1100 / Af293) (Neosartorya fumigata).